Consider the following 45-residue polypeptide: Mu-conotoxin-like Cal 12.1.2c (45 aa).

4 disulfide bridges follow: Cys-3-Cys-16, Cys-11-Cys-28, Cys-18-Cys-33, and Cys-27-Cys-39. Pro-23 is modified (4-hydroxyproline). 2 positions are modified to 6'-bromotryptophan: Trp-37 and Trp-38. Position 40 is a 4-hydroxyproline (Pro-40). Trp-44 carries the 6'-bromotryptophan modification.

In terms of tissue distribution, expressed by the venom duct.

Its subcellular location is the secreted. Its function is as follows. Mu-conotoxins block voltage-gated sodium channels. This toxin reversibly blocks voltage-gated sodium channel in cephalopods, with no alteration in the voltage dependence of sodium conductance or on the kinetics of inactivation. This Californiconus californicus (California cone) protein is Mu-conotoxin-like Cal 12.1.2c.